A 306-amino-acid polypeptide reads, in one-letter code: Eukaryotic translation initiation factor 2 subunit alpha (306 aa).

An S1 motif domain is found at 17-88 (DELVVVNVRQ…EKGYIDLSKR (72 aa)). S52 carries the phosphoserine modification. T179 is subject to Phosphothreonine. 4 positions are modified to phosphoserine: S273, S295, S303, and S305.

The protein belongs to the eIF-2-alpha family. In terms of assembly, eukaryotic translation initiation factor 2 eIF2 is a heterotrimeric complex composed of an alpha, a beta and a gamma subunit.

It localises to the cytoplasm. The protein localises to the cytosol. Functionally, eIF-2 functions in the early steps of protein synthesis by forming a ternary complex with GTP and initiator tRNA. This complex binds to a 40S ribosomal subunit, followed by mRNA binding to form a 43S pre-initiation complex. Junction of the 60S ribosomal subunit to form the 80S initiation complex is preceded by hydrolysis of the GTP bound to eIF-2 and release of an eIF-2-GDP binary complex. In order for eIF-2 to recycle and catalyze another round of initiation, the GDP bound to eIF-2 must exchange with GTP by way of a reaction catalyzed by eIF2B. The sequence is that of Eukaryotic translation initiation factor 2 subunit alpha (tif211) from Schizosaccharomyces pombe (strain 972 / ATCC 24843) (Fission yeast).